The chain runs to 1028 residues: Beta-galactosidase (1028 aa).

Substrate contacts are provided by Asn-104 and Asp-203. Asp-203 is a binding site for Na(+). Mg(2+)-binding residues include Glu-418, His-420, and Glu-463. Residues Glu-463 and 539–542 each bind substrate; that span reads EYAH. Residue Glu-463 is the Proton donor of the active site. Catalysis depends on Glu-539, which acts as the Nucleophile. A Mg(2+)-binding site is contributed by Asn-599. Residues Phe-603 and Asn-606 each contribute to the Na(+) site. Residues Asn-606 and Trp-1004 each contribute to the substrate site.

The protein belongs to the glycosyl hydrolase 2 family. In terms of assembly, homodimer. It depends on Mg(2+) as a cofactor. The cofactor is Mn(2+). Fe cation serves as cofactor. Na(+) is required as a cofactor. Requires K(+) as cofactor.

The catalysed reaction is Hydrolysis of terminal non-reducing beta-D-galactose residues in beta-D-galactosides.. Its activity is regulated as follows. Completely inhibited by Hg(2+), Cu(2+) Ag(2+), and partially inhibited by Zn(2+), imidazole and EDTA. Activated by Ca(2+), Co(2+), Ni(2+). Functionally, this beta-galactosidase is also able to catalyze glycosyl transfer to a series of acceptors, including hexose, pentose, beta- or alpha-disaccharides, hexahydroxy alcohol, cyclitol, and aromatic glycosides, resulting in the production of galacto-oligosaccharides (GOS). The polypeptide is Beta-galactosidase (lacZ) (Enterobacter agglomerans (Erwinia herbicola)).